The primary structure comprises 346 residues: 4-amino-5-hydroxymethyl-2-methylpyrimidine phosphate synthase (346 aa).

Residue K62 is modified to N6-(pyridoxal phosphate)lysine. H66 is an active-site residue. 114–117 contributes to the pyridoxal 5'-phosphate binding site; it reads GEFG. Positions 194–198 match the CCCFC; essential for catalytic activity, may be the site of iron coordination motif; the sequence is CCCFC.

Belongs to the NMT1/THI5 family. Homodimer. Fe cation is required as a cofactor.

Its subcellular location is the cytoplasm. It localises to the nucleus. The enzyme catalyses N(6)-(pyridoxal phosphate)-L-lysyl-[4-amino-5-hydroxymethyl-2-methylpyrimidine phosphate synthase] + L-histidyl-[4-amino-5-hydroxymethyl-2-methylpyrimidine phosphate synthase] + 2 Fe(3+) + 4 H2O = L-lysyl-[4-amino-5-hydroxymethyl-2-methylpyrimidine phosphate synthase] + (2S)-2-amino-5-hydroxy-4-oxopentanoyl-[4-amino-5-hydroxymethyl-2-methylpyrimidine phosphate synthase] + 4-amino-2-methyl-5-(phosphooxymethyl)pyrimidine + 3-oxopropanoate + 2 Fe(2+) + 2 H(+). It participates in cofactor biosynthesis; thiamine diphosphate biosynthesis. In terms of biological role, responsible for the formation of the pyrimidine heterocycle in the thiamine biosynthesis pathway. Catalyzes the formation of hydroxymethylpyrimidine phosphate (HMP-P) from histidine and pyridoxal phosphate (PLP). The protein uses PLP and the active site histidine to form HMP-P, generating an inactive enzyme. The enzyme can only undergo a single turnover, which suggests it is a suicide enzyme. The chain is 4-amino-5-hydroxymethyl-2-methylpyrimidine phosphate synthase from Schizosaccharomyces pombe (strain 972 / ATCC 24843) (Fission yeast).